Consider the following 160-residue polypeptide: Nucleotide-binding protein VS_1405 (160 aa).

This sequence belongs to the YajQ family.

In terms of biological role, nucleotide-binding protein. The sequence is that of Nucleotide-binding protein VS_1405 from Vibrio atlanticus (strain LGP32) (Vibrio splendidus (strain Mel32)).